Reading from the N-terminus, the 317-residue chain is tRNA-cytidine(32) 2-sulfurtransferase (317 aa).

Residues 1–29 (MNTANNTLPTAADWAGEDGAPDAADTRKI) are disordered. A PP-loop motif motif is present at residues 65–70 (SGGKDS). Residues C140, C143, and C231 each coordinate [4Fe-4S] cluster.

This sequence belongs to the TtcA family. As to quaternary structure, homodimer. Requires Mg(2+) as cofactor. [4Fe-4S] cluster serves as cofactor.

It localises to the cytoplasm. It carries out the reaction cytidine(32) in tRNA + S-sulfanyl-L-cysteinyl-[cysteine desulfurase] + AH2 + ATP = 2-thiocytidine(32) in tRNA + L-cysteinyl-[cysteine desulfurase] + A + AMP + diphosphate + H(+). Its pathway is tRNA modification. Its function is as follows. Catalyzes the ATP-dependent 2-thiolation of cytidine in position 32 of tRNA, to form 2-thiocytidine (s(2)C32). The sulfur atoms are provided by the cysteine/cysteine desulfurase (IscS) system. The polypeptide is tRNA-cytidine(32) 2-sulfurtransferase (Acidovorax ebreus (strain TPSY) (Diaphorobacter sp. (strain TPSY))).